A 445-amino-acid chain; its full sequence is 3-phosphoshikimate 1-carboxyvinyltransferase (445 aa).

Positions 1 to 24 are disordered; the sequence is MEHAATLPQTSRRPATPLTGTITV. Polar residues predominate over residues 7–22; sequence LPQTSRRPATPLTGTI. 3 residues coordinate 3-phosphoshikimate: lysine 28, serine 29, and arginine 33. Lysine 28 serves as a coordination point for phosphoenolpyruvate. 2 residues coordinate phosphoenolpyruvate: glycine 101 and arginine 129. The 3-phosphoshikimate site is built by serine 174, glutamine 176, aspartate 326, and lysine 353. Glutamine 176 provides a ligand contact to phosphoenolpyruvate. Aspartate 326 acts as the Proton acceptor in catalysis. 2 residues coordinate phosphoenolpyruvate: arginine 357 and arginine 399.

Belongs to the EPSP synthase family. As to quaternary structure, monomer.

It is found in the cytoplasm. The enzyme catalyses 3-phosphoshikimate + phosphoenolpyruvate = 5-O-(1-carboxyvinyl)-3-phosphoshikimate + phosphate. Its pathway is metabolic intermediate biosynthesis; chorismate biosynthesis; chorismate from D-erythrose 4-phosphate and phosphoenolpyruvate: step 6/7. Its function is as follows. Catalyzes the transfer of the enolpyruvyl moiety of phosphoenolpyruvate (PEP) to the 5-hydroxyl of shikimate-3-phosphate (S3P) to produce enolpyruvyl shikimate-3-phosphate and inorganic phosphate. This Acidiphilium cryptum (strain JF-5) protein is 3-phosphoshikimate 1-carboxyvinyltransferase.